The sequence spans 946 residues: MKPLSSPLQQYWQTVVERLPEPLAEESLSAQAKSVLTFSDFVQDSISAHPEWLTELESQPPQADEWQHYVAWLQEALSNVSDEAGLMRELRLFRRRIMVRIAWAQTLALVTEESILQQLSYLAETLIVAARDWLYDACCREWGTPCNAQGEAQPLLILGMGKLGGGELNFSSDIDLIFAWPEHGCTQGGRRELDNAQFFTRMGQRLIKVLDQPTQDGFVYRVDMRLRPFGESGPLVLSFAALEDYYQEQGRDWERYAMVKARIMGDSEGVYANELRAMLRPFVFRRYIDFSVIQSLRNMKGMIAREVRRRGLTDNIKLGAGGIREIEFIVQVFQLIRGGREPSLQSRSLLPTLSAIAELHLLSENDAEQLRVAYLFLRRLENLLQSINDEQTQTLPSDELNRARLAWAMDFADWPQLTGALTAHMTNVRRVFNELIGDDESETQEESLSEQWRELWQDALQEDDTTPVLAHLSEDDRKQVLTLIADFRKELDKRTIGPRGRQVLDHLMPHLLSDVCAREDAAVTLSRITALLVGIVTRTTYLELLSEFPAALKHLISLCAASPMIASQLARYPLLLDELLDPNTLYQPTATDAYRDELRQYLLRVPEDDEEQQLEALRQFKQAQLLRIAAADIAGTLPVMKVSDHLTWLAEAMIDAVVQQAWVQMVARYGKPNHLNEREGRGFAVVGYGKLGGWELGYSSDLDLIFLHDCPMDAMTDGEREIDGRQFYLRLAQRIMHLFSTRTSSGILYEVDARLRPSGAAGMLVTSAEAFADYQKNEAWTWEHQALVRARVVYGDPQLTAHFDAVRREIMTLPREGKTLQTEVREMREKMRAHLGNKHRDRFDIKADEGGITDIEFITQYLVLRYAHEKPKLTRWSDNVRILELLAQNDIMEEQEAMALTRAYTTLRDELHHLALQELPGHVSEDCFTAERELVRASWQKWLVEE.

An adenylyl removase region spans residues 1–440 (MKPLSSPLQQ…VFNELIGDDE (440 aa)). Positions 449–946 (SEQWRELWQD…ASWQKWLVEE (498 aa)) are adenylyl transferase.

It belongs to the GlnE family. It depends on Mg(2+) as a cofactor.

The enzyme catalyses [glutamine synthetase]-O(4)-(5'-adenylyl)-L-tyrosine + phosphate = [glutamine synthetase]-L-tyrosine + ADP. The catalysed reaction is [glutamine synthetase]-L-tyrosine + ATP = [glutamine synthetase]-O(4)-(5'-adenylyl)-L-tyrosine + diphosphate. Involved in the regulation of glutamine synthetase GlnA, a key enzyme in the process to assimilate ammonia. When cellular nitrogen levels are high, the C-terminal adenylyl transferase (AT) inactivates GlnA by covalent transfer of an adenylyl group from ATP to specific tyrosine residue of GlnA, thus reducing its activity. Conversely, when nitrogen levels are low, the N-terminal adenylyl removase (AR) activates GlnA by removing the adenylyl group by phosphorolysis, increasing its activity. The regulatory region of GlnE binds the signal transduction protein PII (GlnB) which indicates the nitrogen status of the cell. In Escherichia coli O7:K1 (strain IAI39 / ExPEC), this protein is Bifunctional glutamine synthetase adenylyltransferase/adenylyl-removing enzyme.